Consider the following 680-residue polypeptide: Forkhead box protein P4 (680 aa).

Positions 1–17 are enriched in polar residues; that stretch reads MMVESASETIRSAPSGQ. A disordered region spans residues 1-56; it reads MMVESASETIRSAPSGQNGVGSLSGQADGSSGGATGTTASGTGREVTTGADSNGEM. Phosphoserine occurs at positions 52 and 86. Residues Lys-175 and Lys-246 each participate in a glycyl lysine isopeptide (Lys-Gly) (interchain with G-Cter in SUMO2) cross-link. The interval 262-306 is disordered; that stretch reads FAAPPKVSPPLSHHTLPNGQPTVLTSRRDSSSHEETPGSHPLYGH. Over residues 276–286 the composition is skewed to polar residues; sequence TLPNGQPTVLT. The segment covering 287–298 has biased composition (basic and acidic residues); it reads SRRDSSSHEETP. The C2H2-type zinc finger occupies 307–332; sequence GECKWPGCETLCEDLGQFIKHLNTEH. The leucine-zipper stretch occupies residues 349 to 370; the sequence is VQQLEIQLAKESERLQAMMAHL. Lys-378 is covalently cross-linked (Glycyl lysine isopeptide (Lys-Gly) (interchain with G-Cter in SUMO2)). Positions 407–445 are disordered; the sequence is GLVHPPTSAAAPVTPLRPPGLGSASLHGGGPARRRSSDK. A DNA-binding region (fork-head) is located at residues 467–559; it reads RPPFTYASLI…KMTGSPTLVK (93 aa). Ser-554 is subject to Phosphoserine. Residues 602-680 form a disordered region; that stretch reads PLSHDDVGAP…EEELPGEELS (79 aa). Residues 617 to 635 show a composition bias toward polar residues; that stretch reads SNGSSSPPRLSPPQYSHQV. Acidic residues predominate over residues 668-680; the sequence is RDLEEELPGEELS.

As to quaternary structure, forms homodimers and heterodimers with FOXP1 and FOXP2. Dimerization is required for DNA-binding.

Its subcellular location is the nucleus. Transcriptional repressor that represses lung-specific expression. The chain is Forkhead box protein P4 (FOXP4) from Homo sapiens (Human).